The following is a 324-amino-acid chain: Viral cathepsin (324 aa).

An N-terminal signal peptide occupies residues 1–16; sequence MNKIMLCLLVCGVVHA. Positions 17-113 are cleaved as a propeptide — activation peptide; it reads ATYDLLKAPN…VILDRPPDRG (97 aa). 3 disulfides stabilise this stretch: C134–C175, C168–C208, and C263–C311. The active site involves C137. N-linked (GlcNAc...) asparagine; by host glycosylation occurs at N159. Active-site residues include H270 and N290.

It belongs to the peptidase C1 family. Post-translationally, synthesized as an inactive proenzyme and activated by proteolytic removal of the inhibitory propeptide.

The enzyme catalyses Endopeptidase of broad specificity, hydrolyzing substrates of both cathepsin L and cathepsin B.. Cysteine protease that plays an essential role in host liquefaction to facilitate horizontal transmission of the virus. May participate in the degradation of foreign protein expressed by the baculovirus system. The polypeptide is Viral cathepsin (VCATH) (Orgyia pseudotsugata (Douglas-fir tussock moth)).